Here is a 475-residue protein sequence, read N- to C-terminus: B-type cell cycle switch protein ccs52A (475 aa).

The interval 1–29 (MDGTGNRNPPPTSTVGDNSPPPEPSPESL) is disordered. A PEST motif motif is present at residues 7 to 28 (RNPPPTSTVGDNSPPPEPSPES). S43 and S45 each carry phosphoserine. A C-box motif is present at residues 51–57 (DRFIPSR). The CSM motif motif lies at 80–91 (AYTTLLRTALFG). T99 carries the post-translational modification Phosphothreonine. Phosphoserine occurs at positions 144 and 155. WD repeat units lie at residues 166-203 (QDDF…VTKL), 207-246 (GVDD…KIRS), 249-289 (GHRL…SKLS), 290-329 (GHKS…PVLK), 332-374 (EHTA…HLSC), 376-417 (DTGS…KLAT), and 420-459 (GHTY…KSQN). S454 is modified (phosphoserine).

The protein belongs to the WD repeat CDC20/Fizzy family. As to expression, mostly expressed in nodules, and, to a lower extent, in root tips, stems, hypocotyls, leaves, flower buds and flowers.

The protein resides in the nucleus. It participates in protein modification; protein ubiquitination. In terms of biological role, component of the anaphase promoting complex/cyclosome (APC/C), a cell cycle-regulated E3 ubiquitin-protein ligase complex that controls progression through mitosis and the G1 phase of the cell cycle. Required to switch form cell proliferation to cell differentiation, endoreduplication and ploidy-dependent cell enlargement, including during nodulation, before nodule differentiation. Involved in root-knot nematode Meloidogyne incognita giant cells formation. In Medicago truncatula (Barrel medic), this protein is B-type cell cycle switch protein ccs52A.